The sequence spans 247 residues: 3,4-dihydroxy-2-butanone 4-phosphate synthase (247 aa).

Residues Arg-38–Glu-39, Asp-43, Arg-179–Thr-183, and Glu-203 each bind D-ribulose 5-phosphate. Residue Glu-39 coordinates Mg(2+).

It belongs to the DHBP synthase family. Homodimer. It depends on Mg(2+) as a cofactor. Requires Mn(2+) as cofactor.

The enzyme catalyses D-ribulose 5-phosphate = (2S)-2-hydroxy-3-oxobutyl phosphate + formate + H(+). It participates in cofactor biosynthesis; riboflavin biosynthesis; 2-hydroxy-3-oxobutyl phosphate from D-ribulose 5-phosphate: step 1/1. In terms of biological role, catalyzes the conversion of D-ribulose 5-phosphate to formate and 3,4-dihydroxy-2-butanone 4-phosphate. The protein is 3,4-dihydroxy-2-butanone 4-phosphate synthase of Methanosarcina acetivorans (strain ATCC 35395 / DSM 2834 / JCM 12185 / C2A).